The following is a 148-amino-acid chain: Deoxyuridine 5'-triphosphate nucleotidohydrolase (148 aa).

Residues 67–69 (RSG), Asn-80, 84–86 (LID), and Met-94 each bind substrate.

This sequence belongs to the dUTPase family. Requires Mg(2+) as cofactor.

It carries out the reaction dUTP + H2O = dUMP + diphosphate + H(+). Its pathway is pyrimidine metabolism; dUMP biosynthesis; dUMP from dCTP (dUTP route): step 2/2. Functionally, this enzyme is involved in nucleotide metabolism: it produces dUMP, the immediate precursor of thymidine nucleotides and it decreases the intracellular concentration of dUTP so that uracil cannot be incorporated into DNA. In Paraburkholderia xenovorans (strain LB400), this protein is Deoxyuridine 5'-triphosphate nucleotidohydrolase.